Here is a 123-residue protein sequence, read N- to C-terminus: Small ribosomal subunit protein uS12 (123 aa).

The interval 1–28 (MPTIQQLIRKPREPKRVRSKSQHLESCP) is disordered. D89 bears the 3-methylthioaspartic acid mark.

This sequence belongs to the universal ribosomal protein uS12 family. In terms of assembly, part of the 30S ribosomal subunit. Contacts proteins S8 and S17. May interact with IF1 in the 30S initiation complex.

In terms of biological role, with S4 and S5 plays an important role in translational accuracy. Interacts with and stabilizes bases of the 16S rRNA that are involved in tRNA selection in the A site and with the mRNA backbone. Located at the interface of the 30S and 50S subunits, it traverses the body of the 30S subunit contacting proteins on the other side and probably holding the rRNA structure together. The combined cluster of proteins S8, S12 and S17 appears to hold together the shoulder and platform of the 30S subunit. The protein is Small ribosomal subunit protein uS12 of Cereibacter sphaeroides (strain ATCC 17029 / ATH 2.4.9) (Rhodobacter sphaeroides).